Here is a 385-residue protein sequence, read N- to C-terminus: Succinate--CoA ligase [ADP-forming] subunit beta (385 aa).

Residues 9–241 (KELLRDFGIN…IDEEEPSELE (233 aa)) enclose the ATP-grasp domain. ATP contacts are provided by residues K46, 53–55 (GRG), E99, T102, and E107. The Mg(2+) site is built by N196 and D210. Residues N261 and 318 to 320 (GIV) contribute to the substrate site.

This sequence belongs to the succinate/malate CoA ligase beta subunit family. In terms of assembly, heterotetramer of two alpha and two beta subunits. The cofactor is Mg(2+).

The enzyme catalyses succinate + ATP + CoA = succinyl-CoA + ADP + phosphate. It catalyses the reaction GTP + succinate + CoA = succinyl-CoA + GDP + phosphate. It participates in carbohydrate metabolism; tricarboxylic acid cycle; succinate from succinyl-CoA (ligase route): step 1/1. Succinyl-CoA synthetase functions in the citric acid cycle (TCA), coupling the hydrolysis of succinyl-CoA to the synthesis of either ATP or GTP and thus represents the only step of substrate-level phosphorylation in the TCA. The beta subunit provides nucleotide specificity of the enzyme and binds the substrate succinate, while the binding sites for coenzyme A and phosphate are found in the alpha subunit. The polypeptide is Succinate--CoA ligase [ADP-forming] subunit beta (Campylobacter fetus subsp. fetus (strain 82-40)).